The chain runs to 287 residues: Cyclopropane mycolic acid synthase 1 (287 aa).

Residues 33–34 (YS), 68–76 (LLDVGCGWG), 94–99 (TLSKNQ), and 123–124 (WE) each bind S-adenosyl-L-methionine. Residue C269 is part of the active site.

This sequence belongs to the CFA/CMAS family. In terms of assembly, homodimer.

Its subcellular location is the cytoplasm. It catalyses the reaction a 1-acyl-2-(9Z)-enoyl-sn-glycero-3-phospholipid + S-adenosyl-L-methionine = a 1-acyl-2-(9-cyclopronane)-acyl-sn-glycero-3-phospholipid + S-adenosyl-L-homocysteine + H(+). Its pathway is lipid metabolism; mycolic acid biosynthesis. Catalyzes the conversion of a double bond to a cyclopropane ring at the distal position of an alpha mycolic acid via the transfer of a methylene group from S-adenosyl-L-methionine. Cyclopropanated mycolic acids are key factors participating in cell envelope permeability, host immunomodulation and persistence. The polypeptide is Cyclopropane mycolic acid synthase 1 (cmaA1) (Mycobacterium tuberculosis (strain ATCC 25177 / H37Ra)).